The following is a 167-amino-acid chain: Ubiquitin-conjugating enzyme E2 2 (167 aa).

One can recognise a UBC core domain in the interval 4-150 (PARRRLMRDF…VKETVEKSWE (147 aa)). The active-site Glycyl thioester intermediate is the cysteine 88. Residues 148-167 (SWEDNMDDMDDSDEDDEDDE) are disordered. Acidic residues predominate over residues 151–167 (DNMDDMDDSDEDDEDDE).

Belongs to the ubiquitin-conjugating enzyme family.

It is found in the cytoplasm. The protein resides in the nucleus. It catalyses the reaction S-ubiquitinyl-[E1 ubiquitin-activating enzyme]-L-cysteine + [E2 ubiquitin-conjugating enzyme]-L-cysteine = [E1 ubiquitin-activating enzyme]-L-cysteine + S-ubiquitinyl-[E2 ubiquitin-conjugating enzyme]-L-cysteine.. It functions in the pathway protein modification; protein ubiquitination. Functionally, catalyzes the covalent attachment of ubiquitin to other proteins. Plays a role in transcription regulation by catalyzing the monoubiquitination of histone H2B to form H2BK123ub1. H2BK123ub1 gives a specific tag for epigenetic transcriptional activation and is also a prerequisite for H3K4me and H3K79me formation. Also involved in postreplication repair of UV-damaged DNA, in N-end rule-dependent protein degradation and in sporulation. This Candida glabrata (strain ATCC 2001 / BCRC 20586 / JCM 3761 / NBRC 0622 / NRRL Y-65 / CBS 138) (Yeast) protein is Ubiquitin-conjugating enzyme E2 2 (UBC2).